The following is a 1161-amino-acid chain: Perforin-like protein 1 (1161 aa).

Residues 67–86 traverse the membrane as a helical segment; it reads LWITFVCLLTLHMFGLSSAV. A disordered region spans residues 154–329; the sequence is PEALNEVPTK…LGDSSALDLF (176 aa). 2 stretches are compositionally biased toward basic and acidic residues: residues 162-177 and 184-194; these read TKVERNEFTEKGDKTE and ADHKSLLEGRS. Residues 201–211 show a composition bias toward acidic residues; it reads PDDDFDFLFED. The segment covering 222–234 has biased composition (polar residues); the sequence is NKGTSSDETSPGD. Residues 238–249 are compositionally biased toward low complexity; sequence GEGSSASDSLLS. N-linked (GlcNAc...) asparagine glycosylation occurs at N257. Basic residues predominate over residues 264–283; it reads NQKRITHPKSKAQHQKKVTK. Positions 309-322 are enriched in polar residues; sequence NTQADDSQRQSLGD. An N-linked (GlcNAc...) asparagine glycan is attached at N344. The tract at residues 353-381 is disordered; the sequence is AANDGGLFSSSGMGPTGASDETSANPLGS. Positions 361-378 are enriched in polar residues; that stretch reads SSSGMGPTGASDETSANP. Residues 463–817 form the MACPF domain; sequence LSAVYTKATK…LTPQDLSALT (355 aa). A disulfide bridge connects residues C539 and C602. A glycan (N-linked (GlcNAc...) asparagine) is linked at N550. Residues 554–589 form a beta stranded membrane-spanning segment; it reads YQNELSVDASLQGGDPIGLNSFSASTGYRDFAKEVS. N618 is a glycosylation site (N-linked (GlcNAc...) asparagine). The cysteines at positions 643 and 657 are disulfide-linked. Residues 694–740 form a beta stranded membrane-spanning segment; sequence RSEVEKMRNMGIDVKTQLKMQLGGVSGGAGQGTSSKKNQSSSEYQMN. The interval 716–736 is disordered; that stretch reads GGVSGGAGQGTSSKKNQSSSE. N755 is a glycosylation site (N-linked (GlcNAc...) asparagine). Intrachain disulfides connect C845/C900, C874/C881, C928/C981, C957/C964, C1019/C1080, and C1047/C1054. Residues N1022, N1050, and N1111 are each glycosylated (N-linked (GlcNAc...) asparagine). Residues 1094-1149 are disordered; the sequence is VGKAKGNGKKKKGKKGKNKTNAPNEVEEGQQLGADSPSQVSVPADADSGPTSKTMS. Positions 1099-1111 are enriched in basic residues; sequence GNGKKKKGKKGKN.

Belongs to the MPEG1 family. Homooligomer; forms a homooligomeric pore.

The protein localises to the parasitophorous vacuole membrane. It is found in the cytoplasmic vesicle. It localises to the secretory vesicle. The protein resides in the microneme membrane. Functionally, pore-forming protein that promotes parasite exit from host cells: mediates formation of a pore in the parasitophorous vacuolar membrane, leading to membrane permeabilization, thereby facilitating parasite egress from host cells. May also form a pore in the host plasma membrane. Preferentially binds inner leaflet lipids, such as phosphatidylethanolamine (PE) or phosphatidylserine (PS). This Toxoplasma gondii (strain ATCC 50861 / VEG) protein is Perforin-like protein 1.